The following is a 315-amino-acid chain: tRNA pseudouridine synthase B (315 aa).

Asp47 functions as the Nucleophile in the catalytic mechanism.

It belongs to the pseudouridine synthase TruB family. Type 1 subfamily.

It carries out the reaction uridine(55) in tRNA = pseudouridine(55) in tRNA. Functionally, responsible for synthesis of pseudouridine from uracil-55 in the psi GC loop of transfer RNAs. The chain is tRNA pseudouridine synthase B from Shewanella amazonensis (strain ATCC BAA-1098 / SB2B).